A 193-amino-acid chain; its full sequence is Probable nicotinate-nucleotide adenylyltransferase (193 aa).

Belongs to the NadD family.

The enzyme catalyses nicotinate beta-D-ribonucleotide + ATP + H(+) = deamido-NAD(+) + diphosphate. It participates in cofactor biosynthesis; NAD(+) biosynthesis; deamido-NAD(+) from nicotinate D-ribonucleotide: step 1/1. In terms of biological role, catalyzes the reversible adenylation of nicotinate mononucleotide (NaMN) to nicotinic acid adenine dinucleotide (NaAD). The chain is Probable nicotinate-nucleotide adenylyltransferase from Fusobacterium nucleatum subsp. nucleatum (strain ATCC 25586 / DSM 15643 / BCRC 10681 / CIP 101130 / JCM 8532 / KCTC 2640 / LMG 13131 / VPI 4355).